The chain runs to 167 residues: Large ribosomal subunit protein uL10 (167 aa).

The protein belongs to the universal ribosomal protein uL10 family. As to quaternary structure, part of the ribosomal stalk of the 50S ribosomal subunit. The N-terminus interacts with L11 and the large rRNA to form the base of the stalk. The C-terminus forms an elongated spine to which L12 dimers bind in a sequential fashion forming a multimeric L10(L12)X complex.

Its function is as follows. Forms part of the ribosomal stalk, playing a central role in the interaction of the ribosome with GTP-bound translation factors. This is Large ribosomal subunit protein uL10 from Tolumonas auensis (strain DSM 9187 / NBRC 110442 / TA 4).